Reading from the N-terminus, the 229-residue chain is Pyridoxal phosphate homeostasis protein (229 aa).

The residue at position 36 (K36) is an N6-(pyridoxal phosphate)lysine.

It belongs to the pyridoxal phosphate-binding protein YggS/PROSC family. As to quaternary structure, monomer.

Functionally, pyridoxal 5'-phosphate (PLP)-binding protein, which is involved in PLP homeostasis. In Buchnera aphidicola subsp. Schizaphis graminum (strain Sg), this protein is Pyridoxal phosphate homeostasis protein.